A 544-amino-acid chain; its full sequence is Glucans biosynthesis protein G (544 aa).

Residues 1-34 (MVSLLRCQSSKPYSSLICSLALGVAFALSGTAYA) form the signal peptide.

This sequence belongs to the OpgD/OpgG family.

Its subcellular location is the periplasm. It functions in the pathway glycan metabolism; osmoregulated periplasmic glucan (OPG) biosynthesis. In terms of biological role, involved in the biosynthesis of osmoregulated periplasmic glucans (OPGs). The protein is Glucans biosynthesis protein G of Shewanella putrefaciens (strain CN-32 / ATCC BAA-453).